The sequence spans 274 residues: Large ribosomal subunit protein uL2 (274 aa).

Residues 228-254 (VDHPMGGGEGRASGGHPRSRKGLYAKG) form a disordered region. A compositionally biased stretch (basic residues) spans 244 to 254 (PRSRKGLYAKG).

Belongs to the universal ribosomal protein uL2 family. In terms of assembly, part of the 50S ribosomal subunit. Forms a bridge to the 30S subunit in the 70S ribosome.

In terms of biological role, one of the primary rRNA binding proteins. Required for association of the 30S and 50S subunits to form the 70S ribosome, for tRNA binding and peptide bond formation. It has been suggested to have peptidyltransferase activity; this is somewhat controversial. Makes several contacts with the 16S rRNA in the 70S ribosome. The polypeptide is Large ribosomal subunit protein uL2 (Azobacteroides pseudotrichonymphae genomovar. CFP2).